The sequence spans 159 residues: Phosphopantetheine adenylyltransferase (159 aa).

Thr-10 lines the substrate pocket. Residues 10-11 (TF) and His-18 each bind ATP. Substrate contacts are provided by Lys-42, Met-74, and Arg-88. Residues 89–91 (GLR), Glu-99, and 124–130 (WSFISSS) each bind ATP.

The protein belongs to the bacterial CoaD family. As to quaternary structure, homohexamer. Mg(2+) is required as a cofactor.

The protein resides in the cytoplasm. The catalysed reaction is (R)-4'-phosphopantetheine + ATP + H(+) = 3'-dephospho-CoA + diphosphate. Its pathway is cofactor biosynthesis; coenzyme A biosynthesis; CoA from (R)-pantothenate: step 4/5. Functionally, reversibly transfers an adenylyl group from ATP to 4'-phosphopantetheine, yielding dephospho-CoA (dPCoA) and pyrophosphate. The polypeptide is Phosphopantetheine adenylyltransferase (Salmonella typhimurium (strain LT2 / SGSC1412 / ATCC 700720)).